The following is a 198-amino-acid chain: UPF0098 protein PH1269 (198 aa).

This sequence belongs to the UPF0098 family.

The sequence is that of UPF0098 protein PH1269 from Pyrococcus horikoshii (strain ATCC 700860 / DSM 12428 / JCM 9974 / NBRC 100139 / OT-3).